The sequence spans 212 residues: uncharacterized protein (212 aa).

Residues 46-198 form the SIS domain; it reads LERVYREKRK…IYSLMTRLGI (153 aa).

It belongs to the SIS family. PHI subfamily.

This is an uncharacterized protein from Aeropyrum pernix (strain ATCC 700893 / DSM 11879 / JCM 9820 / NBRC 100138 / K1).